A 339-amino-acid polypeptide reads, in one-letter code: MENVNRIVAEGIAAVEAAQDFNALEQIKARYLGKTGELTGLLKTLFTGQMSPEERKTIGAHINECKNRFQTAFNAKRDALNEAKLQARLAAEALDITLPGRAQEGGFTSLHPVTLTLQRVVELFHGMGFEVADGPEIEDDFHNFQALNIPANHPARAMQDTFYVENGFTDVLRTHTSPIQIRYMLDKKEPPIRIIAPGRVYRVDSDATHSPMFHQAEGLWVEEGVTFAFTDLKAVFTDFIRRFFERDDLQVRFRPSFFPFTEPSAEIDIMGENGKWLEVGGCGMVHPNVFTLKNVNIDPEKYTGFAFGIGLDRFAMLRYNVNDLRLFFDNDLNFLKQFE.

Position 262 (E262) interacts with Mg(2+).

The protein belongs to the class-II aminoacyl-tRNA synthetase family. Phe-tRNA synthetase alpha subunit type 1 subfamily. As to quaternary structure, tetramer of two alpha and two beta subunits. Mg(2+) is required as a cofactor.

The protein resides in the cytoplasm. It catalyses the reaction tRNA(Phe) + L-phenylalanine + ATP = L-phenylalanyl-tRNA(Phe) + AMP + diphosphate + H(+). The protein is Phenylalanine--tRNA ligase alpha subunit of Neisseria gonorrhoeae (strain ATCC 700825 / FA 1090).